The following is a 348-amino-acid chain: tRNA N6-adenosine threonylcarbamoyltransferase (348 aa).

Histidine 116 and histidine 120 together coordinate Fe cation. Residues 138 to 142, aspartate 171, glycine 184, aspartate 188, and asparagine 277 each bind substrate; that span reads QVSGG. Residue aspartate 309 coordinates Fe cation.

It belongs to the KAE1 / TsaD family. It depends on Fe(2+) as a cofactor.

Its subcellular location is the cytoplasm. It catalyses the reaction L-threonylcarbamoyladenylate + adenosine(37) in tRNA = N(6)-L-threonylcarbamoyladenosine(37) in tRNA + AMP + H(+). Required for the formation of a threonylcarbamoyl group on adenosine at position 37 (t(6)A37) in tRNAs that read codons beginning with adenine. Is involved in the transfer of the threonylcarbamoyl moiety of threonylcarbamoyl-AMP (TC-AMP) to the N6 group of A37, together with TsaE and TsaB. TsaD likely plays a direct catalytic role in this reaction. This is tRNA N6-adenosine threonylcarbamoyltransferase from Lactobacillus johnsonii (strain CNCM I-12250 / La1 / NCC 533).